Reading from the N-terminus, the 467-residue chain is MTTTTRMDYETTLKGKYPAKRHAQRVADYIRNKVPGASGVLYLEGRATKLLEDNDEAEPFRQRRYFYYLTGCPLADCHYMYDIDADKSTLFIPPIDPESVIWSGLPVSADEAKQNWDVDEVKYTSDVNATLAHVGSEKPKGASVFAIPNQVSDKITFLEFDNKNFSILKEAIEVTRVVKDEYELAIMAKANEISSDGHKAVMQKVKHVQNERELEAVFLGHCIAKGSRNQAYHSIVASGRAAATLHYVPNNADMAGKLNLLLDAGGEWDCYASDITRTFPINGKFTKESREVYDIVLKMQNDCIAALKEGVLWDDVHLLAHKIAIDGLLQIGILQGDKDEILESRTSVAFFPHGLGHYLGMDTHDTGGNPNYADKDTMFRYLRVRGRLPAGSVITVEPGIYFCNFIIEPFLKDPKHSKYINADVLEKYWDVGGVRIEDNLVITKDGTYNLTTAPKDPEEMEKIIQQS.

Mn(2+) is bound by residues Asp263, Asp274, Glu397, and Glu437.

It belongs to the peptidase M24B family. It depends on Mn(2+) as a cofactor.

The catalysed reaction is Release of any N-terminal amino acid, including proline, that is linked to proline, even from a dipeptide or tripeptide.. Catalyzes the removal of a penultimate prolyl residue from the N-termini of peptides. The sequence is that of Probable Xaa-Pro aminopeptidase SMAC_04549 from Sordaria macrospora (strain ATCC MYA-333 / DSM 997 / K(L3346) / K-hell).